Consider the following 359-residue polypeptide: uncharacterized protein (359 aa).

Low complexity predominate over residues 73–88 (AATAGTTPATGASGSA). The interval 73-93 (AATAGTTPATGASGSARPTDA) is disordered. In terms of domain architecture, Macro spans 179–354 (PSTCRGDNVS…AFSAAIQAGE (176 aa)).

This is an uncharacterized protein from Mycobacterium tuberculosis (strain ATCC 25618 / H37Rv).